Here is a 115-residue protein sequence, read N- to C-terminus: Large ribosomal subunit protein bL19 (115 aa).

The protein belongs to the bacterial ribosomal protein bL19 family.

Functionally, this protein is located at the 30S-50S ribosomal subunit interface and may play a role in the structure and function of the aminoacyl-tRNA binding site. The chain is Large ribosomal subunit protein bL19 from Buchnera aphidicola subsp. Acyrthosiphon pisum (strain 5A).